A 501-amino-acid polypeptide reads, in one-letter code: Phenylalanine--tRNA ligase alpha subunit (501 aa).

Residues T340 and F423 each coordinate L-phenylalanine. E425 is a binding site for Mg(2+). F448 provides a ligand contact to L-phenylalanine.

This sequence belongs to the class-II aminoacyl-tRNA synthetase family. Phe-tRNA synthetase alpha subunit type 2 subfamily. Tetramer of two alpha and two beta subunits. It depends on Mg(2+) as a cofactor.

Its subcellular location is the cytoplasm. It catalyses the reaction tRNA(Phe) + L-phenylalanine + ATP = L-phenylalanyl-tRNA(Phe) + AMP + diphosphate + H(+). In Methanococcus vannielii (strain ATCC 35089 / DSM 1224 / JCM 13029 / OCM 148 / SB), this protein is Phenylalanine--tRNA ligase alpha subunit.